We begin with the raw amino-acid sequence, 525 residues long: Cobyric acid synthase (525 aa).

A GATase cobBQ-type domain is found at 251 to 452 (ELEIAVLYLP…FHGIFDNDLL (202 aa)). Cysteine 332 acts as the Nucleophile in catalysis. The active site involves histidine 444.

It belongs to the CobB/CobQ family. CobQ subfamily.

The protein operates within cofactor biosynthesis; adenosylcobalamin biosynthesis. In terms of biological role, catalyzes amidations at positions B, D, E, and G on adenosylcobyrinic A,C-diamide. NH(2) groups are provided by glutamine, and one molecule of ATP is hydrogenolyzed for each amidation. The protein is Cobyric acid synthase of Pelotomaculum thermopropionicum (strain DSM 13744 / JCM 10971 / SI).